Consider the following 523-residue polypeptide: Synaptotagmin-10 (523 aa).

Residues 1–55 (MSFRKEDGVSSLCQKALHIITELCFAGQVEWDKCSGIFPADRSGQGGGGTDISVS) are Vesicular-facing. A cysteine motif region spans residues 13–35 (CQKALHIITELCFAGQVEWDKCS). Residues 56–76 (LLAVVVSFCGLALLVVSLFVF) form a helical membrane-spanning segment. The Cytoplasmic portion of the chain corresponds to 77 to 523 (WKLCWPCWKS…CSSPRPPSTP (447 aa)). Thr136 is subject to Phosphothreonine. 2 C2 domains span residues 231–352 (TCGK…TVWK) and 363–496 (DLGE…THWH). 11 residues coordinate Ca(2+): Asp262, Asp268, Asp320, Phe321, Asp322, Ser325, Asp328, Asp394, Asp400, Asp454, and Asp456.

This sequence belongs to the synaptotagmin family. In terms of assembly, homodimer; disulfide-linked via the cysteine motif. Can also form heterodimers with SYT3, SYT6, SYT7 and SYT9. Requires Ca(2+) as cofactor. As to expression, highly expressed in the olfactory bulb.

Its subcellular location is the cytoplasmic vesicle. The protein resides in the secretory vesicle membrane. Ca(2+) sensor specifically required for the Ca(2+)-dependent exocytosis of secretory vesicles containing IGF1 in neurons of the olfactory bulb. Exocytosis of IGF1 is required for sensory perception of smell. Not involved in Ca(2+)-dependent synaptic vesicle exocytosis. Acts through Ca(2+) and phospholipid binding to the C2 domain: Ca(2+) induces binding of the C2-domains to phospholipid membranes and to assembled SNARE-complexes; both actions contribute to triggering exocytosis. The polypeptide is Synaptotagmin-10 (Mus musculus (Mouse)).